The chain runs to 273 residues: Dermonecrotic toxin LruSicTox-alphaIC1b (273 aa).

His-5 is an active-site residue. Glu-25 and Asp-27 together coordinate Mg(2+). The Nucleophile role is filled by His-41. Intrachain disulfides connect Cys-45–Cys-51 and Cys-47–Cys-190. Asp-85 contacts Mg(2+).

It belongs to the arthropod phospholipase D family. Class II subfamily. Mg(2+) serves as cofactor. Expressed by the venom gland.

Its subcellular location is the secreted. It catalyses the reaction an N-(acyl)-sphingosylphosphocholine = an N-(acyl)-sphingosyl-1,3-cyclic phosphate + choline. The catalysed reaction is an N-(acyl)-sphingosylphosphoethanolamine = an N-(acyl)-sphingosyl-1,3-cyclic phosphate + ethanolamine. The enzyme catalyses a 1-acyl-sn-glycero-3-phosphocholine = a 1-acyl-sn-glycero-2,3-cyclic phosphate + choline. It carries out the reaction a 1-acyl-sn-glycero-3-phosphoethanolamine = a 1-acyl-sn-glycero-2,3-cyclic phosphate + ethanolamine. Its function is as follows. Dermonecrotic toxins cleave the phosphodiester linkage between the phosphate and headgroup of certain phospholipids (sphingolipid and lysolipid substrates), forming an alcohol (often choline) and a cyclic phosphate. This toxin acts on sphingomyelin (SM). It may also act on ceramide phosphoethanolamine (CPE), lysophosphatidylcholine (LPC) and lysophosphatidylethanolamine (LPE), but not on lysophosphatidylserine (LPS), and lysophosphatidylglycerol (LPG). It acts by transphosphatidylation, releasing exclusively cyclic phosphate products as second products. Induces dermonecrosis, hemolysis, increased vascular permeability, edema, inflammatory response, and platelet aggregation. The polypeptide is Dermonecrotic toxin LruSicTox-alphaIC1b (Loxosceles rufescens (Mediterranean recluse spider)).